A 145-amino-acid chain; its full sequence is Peptide methionine sulfoxide reductase MsrB (145 aa).

In terms of domain architecture, MsrB spans 6 to 129 (KNERLKQLTD…NSAALRFIPV (124 aa)). C118 (nucleophile) is an active-site residue.

It belongs to the MsrB Met sulfoxide reductase family.

The catalysed reaction is L-methionyl-[protein] + [thioredoxin]-disulfide + H2O = L-methionyl-(R)-S-oxide-[protein] + [thioredoxin]-dithiol. This is Peptide methionine sulfoxide reductase MsrB from Listeria welshimeri serovar 6b (strain ATCC 35897 / DSM 20650 / CCUG 15529 / CIP 8149 / NCTC 11857 / SLCC 5334 / V8).